The sequence spans 69 residues: DNA-directed RNA polymerase subunit epsilon (69 aa).

Belongs to the RNA polymerase subunit epsilon family. As to quaternary structure, RNAP is composed of a core of 2 alpha, a beta and a beta' subunit. The core is associated with a delta subunit, and at least one of epsilon or omega. When a sigma factor is associated with the core the holoenzyme is formed, which can initiate transcription.

It catalyses the reaction RNA(n) + a ribonucleoside 5'-triphosphate = RNA(n+1) + diphosphate. Functionally, a non-essential component of RNA polymerase (RNAP). In Listeria welshimeri serovar 6b (strain ATCC 35897 / DSM 20650 / CCUG 15529 / CIP 8149 / NCTC 11857 / SLCC 5334 / V8), this protein is DNA-directed RNA polymerase subunit epsilon.